Here is a 333-residue protein sequence, read N- to C-terminus: S-adenosylmethionine decarboxylase proenzyme (333 aa).

Phe-7 is a binding site for substrate. Residues Glu-8 and Glu-11 contribute to the active site. Position 67 (Glu-67) interacts with substrate. Ser-68 serves as the catalytic Schiff-base intermediate with substrate; via pyruvic acid. Pyruvic acid (Ser); by autocatalysis is present on Ser-68. Cys-82 functions as the Proton donor; for catalytic activity in the catalytic mechanism. Substrate is bound at residue Phe-223. Active-site proton acceptor; for processing activity residues include Ser-229 and His-243. Substrate is bound at residue Glu-247. Ser-298 is modified (phosphoserine).

It belongs to the eukaryotic AdoMetDC family. As to quaternary structure, heterotetramer of two alpha and two beta chains. Requires pyruvate as cofactor. Post-translationally, is synthesized initially as an inactive proenzyme. Formation of the active enzyme involves a self-maturation process in which the active site pyruvoyl group is generated from an internal serine residue via an autocatalytic post-translational modification. Two non-identical subunits are generated from the proenzyme in this reaction, and the pyruvate is formed at the N-terminus of the alpha chain, which is derived from the carboxyl end of the proenzyme. The post-translation cleavage follows an unusual pathway, termed non-hydrolytic serinolysis, in which the side chain hydroxyl group of the serine supplies its oxygen atom to form the C-terminus of the beta chain, while the remainder of the serine residue undergoes an oxidative deamination to produce ammonia and the pyruvoyl group blocking the N-terminus of the alpha chain.

It carries out the reaction S-adenosyl-L-methionine + H(+) = S-adenosyl 3-(methylsulfanyl)propylamine + CO2. The protein operates within amine and polyamine biosynthesis; S-adenosylmethioninamine biosynthesis; S-adenosylmethioninamine from S-adenosyl-L-methionine: step 1/1. Its function is as follows. Essential for biosynthesis of the polyamines spermidine and spermine. Promotes maintenance and self-renewal of embryonic stem cells, by maintaining spermine levels. In Rattus norvegicus (Rat), this protein is S-adenosylmethionine decarboxylase proenzyme (Amd1).